We begin with the raw amino-acid sequence, 1213 residues long: DNA-directed RNA polymerase subunit beta' (1213 aa).

C60, C62, C75, and C78 together coordinate Zn(2+). Positions 450, 452, and 454 each coordinate Mg(2+). 4 residues coordinate Zn(2+): C819, C893, C900, and C903.

This sequence belongs to the RNA polymerase beta' chain family. In terms of assembly, the RNAP catalytic core consists of 2 alpha, 1 beta, 1 beta' and 1 omega subunit. When a sigma factor is associated with the core the holoenzyme is formed, which can initiate transcription. The cofactor is Mg(2+). Zn(2+) is required as a cofactor.

It carries out the reaction RNA(n) + a ribonucleoside 5'-triphosphate = RNA(n+1) + diphosphate. In terms of biological role, DNA-dependent RNA polymerase catalyzes the transcription of DNA into RNA using the four ribonucleoside triphosphates as substrates. This chain is DNA-directed RNA polymerase subunit beta', found in Streptococcus pyogenes serotype M4 (strain MGAS10750).